Here is a 129-residue protein sequence, read N- to C-terminus: Translation initiation factor 5A (129 aa).

Hypusine is present on Lys36.

This sequence belongs to the eIF-5A family.

It is found in the cytoplasm. Functions by promoting the formation of the first peptide bond. The protein is Translation initiation factor 5A (eIF5A) of Methanobrevibacter smithii (strain ATCC 35061 / DSM 861 / OCM 144 / PS).